The primary structure comprises 110 residues: Iron-sulfur cluster assembly protein CyaY (110 aa).

It belongs to the frataxin family.

Its function is as follows. Involved in iron-sulfur (Fe-S) cluster assembly. May act as a regulator of Fe-S biogenesis. This chain is Iron-sulfur cluster assembly protein CyaY, found in Stutzerimonas stutzeri (strain A1501) (Pseudomonas stutzeri).